The primary structure comprises 382 residues: Exostosin-1 homolog (382 aa).

Positions 1 to 20 (MQNVMKFHLVIFMLFGSVRL) are cleaved as a signal peptide. N268 is a glycosylation site (N-linked (GlcNAc...) asparagine).

Belongs to the glycosyltransferase 47 family. Interacts with rib-2.

It is found in the endoplasmic reticulum. Its subcellular location is the golgi apparatus. Its function is as follows. Required for the biosynthesis of heparan sulfate by positively regulating N-acetylglucosamine transferase II (GlcNAcT-II) and glucuronyl transferase II (GlcAT-II) activities of glycosyltransferase rib-2. Probably not directly involved in chondroitin sulfate biosynthesis but negatively regulates chondroitin sulfate levels. Maternally required for normal ventral epidermal enclosure and for embryo elongation during the early stages of embryonic development. In addition, involved in the elongation of the pharyngeal isthmus and in the organization of the actin cytoskeleton in the pharyngeal muscles during the later stages embryonic development. In adults, regulates egg-laying and the normal morphogenesis of the vulva. Also involved in the directed migration of hermaphrodite-specific neurons. The protein is Exostosin-1 homolog (rib-1) of Caenorhabditis elegans.